A 429-amino-acid polypeptide reads, in one-letter code: Glutamate-1-semialdehyde 2,1-aminomutase 1 (429 aa).

An N6-(pyridoxal phosphate)lysine modification is found at Lys-267.

The protein belongs to the class-III pyridoxal-phosphate-dependent aminotransferase family. HemL subfamily. Homodimer. Requires pyridoxal 5'-phosphate as cofactor.

Its subcellular location is the cytoplasm. The catalysed reaction is (S)-4-amino-5-oxopentanoate = 5-aminolevulinate. The protein operates within porphyrin-containing compound metabolism; protoporphyrin-IX biosynthesis; 5-aminolevulinate from L-glutamyl-tRNA(Glu): step 2/2. The sequence is that of Glutamate-1-semialdehyde 2,1-aminomutase 1 from Bacillus velezensis (strain DSM 23117 / BGSC 10A6 / LMG 26770 / FZB42) (Bacillus amyloliquefaciens subsp. plantarum).